The following is a 1390-amino-acid chain: DNA-directed RNA polymerase subunit beta (1390 aa).

A disordered region spans residues 556-576 (KLADQDAENDPDSDLGTKSSN).

The protein belongs to the RNA polymerase beta chain family. In terms of assembly, the RNAP catalytic core consists of 2 alpha, 1 beta, 1 beta' and 1 omega subunit. When a sigma factor is associated with the core the holoenzyme is formed, which can initiate transcription.

The enzyme catalyses RNA(n) + a ribonucleoside 5'-triphosphate = RNA(n+1) + diphosphate. DNA-dependent RNA polymerase catalyzes the transcription of DNA into RNA using the four ribonucleoside triphosphates as substrates. The sequence is that of DNA-directed RNA polymerase subunit beta from Mycoplasmoides gallisepticum (strain R(low / passage 15 / clone 2)) (Mycoplasma gallisepticum).